We begin with the raw amino-acid sequence, 556 residues long: Potassium-transporting ATPase potassium-binding subunit (556 aa).

The next 10 membrane-spanning stretches (helical) occupy residues 6-26, 65-85, 133-153, 176-196, 249-269, 283-303, 378-398, 415-435, 483-503, and 526-546; these read AGIAFLASLVAAVVLVHVPLG, SVLAFSAVSIVFLFGLQLVQG, GLAVQNFVSAAVGMAVAIALV, LRILLPLAIVGALLLVAGGAI, PTPWTNWLENFLILLIPFSLP, VAIAAIMGAIALASVSLTMLL, GLYGMLILAIITVFVAGLMVG, LAASYFLATPLIVLTGSAIAM, ALGLAMVFGRLLPIILVLALA, and FVGMTVGVTLILVALTFLPIL.

It belongs to the KdpA family. The system is composed of three essential subunits: KdpA, KdpB and KdpC.

It is found in the cell membrane. In terms of biological role, part of the high-affinity ATP-driven potassium transport (or Kdp) system, which catalyzes the hydrolysis of ATP coupled with the electrogenic transport of potassium into the cytoplasm. This subunit binds the extracellular potassium ions and delivers the ions to the membrane domain of KdpB through an intramembrane tunnel. The protein is Potassium-transporting ATPase potassium-binding subunit of Mycolicibacterium smegmatis (strain ATCC 700084 / mc(2)155) (Mycobacterium smegmatis).